Here is a 149-residue protein sequence, read N- to C-terminus: Transcription factor MafF (149 aa).

The basic motif stretch occupies residues 51–76 (RLKQRRRTLKNRGYAASCRVKRVCQK). The region spanning 51-114 (RLKQRRRTLK…DTLRGKYEAL (64 aa)) is the bZIP domain. The leucine-zipper stretch occupies residues 79–93 (LQKQKMELEWEVDKL).

It belongs to the bZIP family. Maf subfamily. In terms of assembly, monomer and homo- or heterodimer. As to expression, highly expressed in the ovary, lower expression in the brain, heart and mesenterium.

Its subcellular location is the nucleus. In terms of biological role, since it lacks a putative transactivation domain, it may behave as a transcriptional repressor when it dimerizes among itself. May also serve as a transcriptional activator by dimerizing with other (usually larger) basic-zipper proteins and recruiting them to specific DNA-binding sites. May be involved in the cellular stress response. The protein is Transcription factor MafF (MAFF) of Gallus gallus (Chicken).